We begin with the raw amino-acid sequence, 221 residues long: Deoxyribose-phosphate aldolase (221 aa).

The active-site Proton donor/acceptor is Asp-89. Lys-151 functions as the Schiff-base intermediate with acetaldehyde in the catalytic mechanism. The active-site Proton donor/acceptor is the Lys-180.

The protein belongs to the DeoC/FbaB aldolase family. DeoC type 1 subfamily.

It is found in the cytoplasm. It carries out the reaction 2-deoxy-D-ribose 5-phosphate = D-glyceraldehyde 3-phosphate + acetaldehyde. It functions in the pathway carbohydrate degradation; 2-deoxy-D-ribose 1-phosphate degradation; D-glyceraldehyde 3-phosphate and acetaldehyde from 2-deoxy-alpha-D-ribose 1-phosphate: step 2/2. Catalyzes a reversible aldol reaction between acetaldehyde and D-glyceraldehyde 3-phosphate to generate 2-deoxy-D-ribose 5-phosphate. This is Deoxyribose-phosphate aldolase from Brevibacillus brevis (strain 47 / JCM 6285 / NBRC 100599).